Reading from the N-terminus, the 785-residue chain is Cadherin-7 (785 aa).

Residues 1-27 form the signal peptide; it reads MKLGKVEFCHLLQIIALFLCLSGMNQA. Positions 28–47 are excised as a propeptide; sequence EPSRSRSKPYFQSGRTRTKR. At 48-607 the chain is on the extracellular side; it reads SWVWNQFFVL…AYILPAGLST (560 aa). 5 consecutive Cadherin domains span residues 49–153, 154–262, 263–377, 378–482, and 482–599; these read WVWN…EPKF, LDGP…PPRF, PRRS…PPVF, TSRL…APEF, and FAME…AEAY. Asn449 and Asn530 each carry an N-linked (GlcNAc...) asparagine glycan. Residues 608–628 traverse the membrane as a helical segment; the sequence is GALIAILACVLTLLVLVLLIV. Over 629 to 785 the chain is Cytoplasmic; the sequence is TMRRRKKEPL…YGSGPDCLYS (157 aa).

It localises to the cell membrane. Cadherins are calcium-dependent cell adhesion proteins. They preferentially interact with themselves in a homophilic manner in connecting cells; cadherins may thus contribute to the sorting of heterogeneous cell types. This is Cadherin-7 (CDH7) from Gallus gallus (Chicken).